We begin with the raw amino-acid sequence, 162 residues long: Troponin C, skeletal muscle (162 aa).

EF-hand domains follow at residues Glu17–Asn52, Pro53–Glu88, Lys93–His128, and Val129–Gln162. Residues Asp30, Asp32, Asp36, Glu41, Asp66, Asp68, Ser70, Thr72, Glu77, Asp106, Asn108, Asp110, Glu117, Asp142, Asn144, Asp146, Arg148, and Glu153 each contribute to the Ca(2+) site.

The protein belongs to the troponin C family.

In terms of biological role, troponin is the central regulatory protein of striated muscle contraction. Tn consists of three components: Tn-I which is the inhibitor of actomyosin ATPase, Tn-T which contains the binding site for tropomyosin and Tn-C. The binding of calcium to Tn-C abolishes the inhibitory action of Tn on actin filaments. The polypeptide is Troponin C, skeletal muscle (TNNC2) (Meleagris gallopavo (Wild turkey)).